A 445-amino-acid chain; its full sequence is Oxysterols receptor LXR-alpha (445 aa).

Disordered regions lie at residues 1–34 (MSLW…QGGN) and 62–86 (TALL…KKGP). A transactivation AF-1; required for ligand-independent transactivation function region spans residues 1–94 (MSLWLEAAVP…GPAPKMLGNE (94 aa)). Positions 93 to 168 (NELCSVCGDK…AGMREECVLS (76 aa)) form a DNA-binding region, nuclear receptor. 2 consecutive NR C4-type zinc fingers follow at residues 96–116 (CSVC…CEGC) and 132–156 (CHSG…LRKC). The tract at residues 178–200 (KRQEEEQAQATSVSPRVSSPPQV) is disordered. A compositionally biased stretch (low complexity) spans 189–200 (SVSPRVSSPPQV). Serine 191 carries the post-translational modification Phosphoserine. A transactivation AF-2; required for ligand-dependent transactivation function; mediates interaction with CCAR2 region spans residues 203–445 (QLSPEQLGMI…LLSEIWDVHE (243 aa)). Positions 207–445 (EQLGMIEKLV…LLSEIWDVHE (239 aa)) constitute an NR LBD domain.

This sequence belongs to the nuclear hormone receptor family. NR1 subfamily. In terms of assembly, heterodimer of NR1H3 and RXR (retinoic acid receptor). Interacts with CCAR2 (via N-terminus) in a ligand-independent manner. Interacts with SIRT1 and this interaction is inhibited by CCAR2. Ubiquitinated by UBR5, leading to its degradation: UBR5 specifically recognizes and binds ligand-bound NR1H3 when it is not associated with coactivators (NCOAs). In presence of NCOAs, the UBR5-degron is not accessible, preventing its ubiquitination and degradation. In adults it is expressed in spleen, pituitary, lung, liver, and fat. Weaker expression is observed in several other tissues.

Its subcellular location is the nucleus. It is found in the cytoplasm. In terms of biological role, nuclear receptor that exhibits a ligand-dependent transcriptional activation activity. Interaction with retinoic acid receptor (RXR) shifts RXR from its role as a silent DNA-binding partner to an active ligand-binding subunit in mediating retinoid responses through target genes defined by LXRES. LXRES are DR4-type response elements characterized by direct repeats of two similar hexanuclotide half-sites spaced by four nucleotides. Plays an important role in the regulation of cholesterol homeostasis, regulating cholesterol uptake through MYLIP-dependent ubiquitination of LDLR, VLDLR and LRP8. Interplays functionally with RORA for the regulation of genes involved in liver metabolism. Induces LPCAT3-dependent phospholipid remodeling in endoplasmic reticulum (ER) membranes of hepatocytes, driving SREBF1 processing and lipogenesis. Via LPCAT3, triggers the incorporation of arachidonate into phosphatidylcholines of ER membranes, increasing membrane dynamics and enabling triacylglycerols transfer to nascent very low-density lipoprotein (VLDL) particles. Via LPCAT3 also counteracts lipid-induced ER stress response and inflammation, likely by modulating SRC kinase membrane compartmentalization and limiting the synthesis of lipid inflammatory mediators. The polypeptide is Oxysterols receptor LXR-alpha (Nr1h3) (Rattus norvegicus (Rat)).